Here is a 344-residue protein sequence, read N- to C-terminus: Protein PopA1 (344 aa).

Disordered regions lie at residues 1–28 (MSVG…NSQQ), 58–108 (SAGG…DANN), 134–156 (QPGG…AGGQ), 211–242 (GNGV…EDQG), and 268–311 (GGGN…NLQS). Low complexity-rich tracts occupy residues 8-28 (SPSN…NSQQ) and 65-83 (NTGN…ANDP). The segment covering 89–108 (SKSQGPQSANKTGNVDDANN) has biased composition (polar residues). Over residues 138–156 (NDKGNGVGGANGAKGAGGQ) the composition is skewed to gly residues. The span at 215 to 235 (NGNQANGPQNAGDVNGANGAD) shows a compositional bias: low complexity. Over residues 268–279 (GGGNQAQGGSKG) the composition is skewed to gly residues. A compositionally biased stretch (low complexity) spans 280–294 (AGNASPASGANPGAN). Positions 295-311 (QPGSADDQSSGQNNLQS) are enriched in polar residues.

Post-translationally, popA2 and PopA3 are produced from PopA1.

Its subcellular location is the secreted. Acts as a specific hypersensitive response (HR) elicitor. Has activity on tobacco (non-host plant) and petunia but is without activity on tomato (host plant); PopA3 seems to be more active than a PopA1-PopA2 mixture. The chain is Protein PopA1 (popA) from Ralstonia nicotianae (strain ATCC BAA-1114 / GMI1000) (Ralstonia solanacearum).